The following is a 324-amino-acid chain: Putative S-adenosyl-L-methionine-dependent methyltransferase MUL_0818 (324 aa).

Residues Asp138 and 167–168 (DL) contribute to the S-adenosyl-L-methionine site.

It belongs to the UPF0677 family.

In terms of biological role, exhibits S-adenosyl-L-methionine-dependent methyltransferase activity. The chain is Putative S-adenosyl-L-methionine-dependent methyltransferase MUL_0818 from Mycobacterium ulcerans (strain Agy99).